Reading from the N-terminus, the 343-residue chain is Heat-inducible transcription repressor HrcA (343 aa).

Belongs to the HrcA family.

Functionally, negative regulator of class I heat shock genes (grpE-dnaK-dnaJ and groELS operons). Prevents heat-shock induction of these operons. This Alkaliphilus metalliredigens (strain QYMF) protein is Heat-inducible transcription repressor HrcA.